The following is a 267-amino-acid chain: Phosphate import ATP-binding protein PstB (267 aa).

Residues 21-262 (IEVKNLNFYY…PREKRTQDYI (242 aa)) form the ABC transporter domain. Position 53–60 (53–60 (GPSGCGKS)) interacts with ATP.

This sequence belongs to the ABC transporter superfamily. Phosphate importer (TC 3.A.1.7) family. In terms of assembly, the complex is composed of two ATP-binding proteins (PstB), two transmembrane proteins (PstC and PstA) and a solute-binding protein (PstS).

It localises to the cell inner membrane. It catalyses the reaction phosphate(out) + ATP + H2O = ADP + 2 phosphate(in) + H(+). Part of the ABC transporter complex PstSACB involved in phosphate import. Responsible for energy coupling to the transport system. In Mesorhizobium japonicum (strain LMG 29417 / CECT 9101 / MAFF 303099) (Mesorhizobium loti (strain MAFF 303099)), this protein is Phosphate import ATP-binding protein PstB.